The chain runs to 292 residues: Hypoxia responsive morphology factor A (292 aa).

The short motif at 48–70 is the Bipartite nuclear localization signal element; the sequence is RRNGRRRNLEYVAQHRRKIARKI. An RNA recognition motif (RRM)-like domain region spans residues 156 to 186; it reads GKEHYSLHLSTLPAIRNAFGDVIFDAIERSP.

It belongs to the hrmA family.

Its subcellular location is the nucleus. Its function is as follows. Hypoxia responsive morphology factor that modulates the expression of the subtelomeric hrmA-associated cluster (HAC) containing genes that alter the hyphal surface (such as reduced total chitin or increased beta-glucan exposure) and perturb inter-hyphal interactions within the developing biofilms, resulting in a loss of vertically aligned polarized growing filaments. Consequently, this hypoxia-typic morphotype (called H-MORPH) with altered biofilm architecture leads to increased hypoxia fitness, increased host inflammation, rapid disease progression, and mortality in a murine model of invasive aspergillosis. This is Hypoxia responsive morphology factor A from Aspergillus fumigatus (strain CBS 144.89 / FGSC A1163 / CEA10) (Neosartorya fumigata).